Reading from the N-terminus, the 277-residue chain is Large ribosomal subunit protein uL2 (277 aa).

Positions 220–277 are disordered; it reads VRGSVMNPNDHPHGGGEGKAPIGRPSPMSPWGKKTLGKKTRSSKARSEKLIIRHRKSR. Residues 254-263 are compositionally biased toward basic residues; sequence TLGKKTRSSK.

The protein belongs to the universal ribosomal protein uL2 family. Part of the 50S ribosomal subunit. Forms a bridge to the 30S subunit in the 70S ribosome.

Its function is as follows. One of the primary rRNA binding proteins. Required for association of the 30S and 50S subunits to form the 70S ribosome, for tRNA binding and peptide bond formation. It has been suggested to have peptidyltransferase activity; this is somewhat controversial. Makes several contacts with the 16S rRNA in the 70S ribosome. This is Large ribosomal subunit protein uL2 from Latilactobacillus sakei subsp. sakei (strain 23K) (Lactobacillus sakei subsp. sakei).